Reading from the N-terminus, the 615-residue chain is MDRRSWLWRRKSSEKSPGETESTGSVSSHSERFSDDQRSQSPELNSKPVTREEEATADIKILTERLSAALLNVSLKEDLAKQHAKVAEEAVSGWEKAENEAAALKQQLDASTSKVSALEDRNSHLDSALKECVRQLWQGREEQNQKIEEAINNKCKEWETTKSQLEARIEELQARQDVTTSSVHEDLYPKLEALEKENSALKLQLLSKSEEVKIRTIERDLSTQAAESASKQQLEGIKKLTKLEAECRKLRVMVRRSDNSSDLKSSIDNQSDYSGRVSFSDNEMQSPSEKIIGKSSMATSVDIGLMDDFLEMEKLAALPHSEPGRKHSESNKELEKSNAHVNQLKHELKTSLRRISELEEKVEMVEVEKLQLEMALNGSKEQIEALQSRLKEIEGKLSEMKKLEAENQELELLLGESGKQMEDLQRQLNKAQVNLSELETRRAEKLELTMCLNGTKKQLETSQNRLKETERKLTELQTLLHLTKDAKEAAEDGLKAANGKTEAIESRLKDVEAEAESLILKIKSLEDVTEKERALSAKHNSKCNELQDEISKLKQELEHHQETEPAPNHIKGFELKQEKELAVAASKFAECQRTIASLGQRLQSLATFEDFLIES.

The span at 1 to 18 (MDRRSWLWRRKSSEKSPG) shows a compositional bias: basic and acidic residues. Residues 1–55 (MDRRSWLWRRKSSEKSPGETESTGSVSSHSERFSDDQRSQSPELNSKPVTREEEA) form a disordered region. The segment covering 19–28 (ETESTGSVSS) has biased composition (polar residues). Residues 29 to 38 (HSERFSDDQR) show a composition bias toward basic and acidic residues. Positions 39-48 (SQSPELNSKP) are enriched in polar residues. 2 coiled-coil regions span residues 87–121 (AEEAVSGWEKAENEAAALKQQLDASTSKVSALEDR) and 148–211 (EEAI…KSEE). Disordered regions lie at residues 258–289 (DNSSDLKSSIDNQSDYSGRVSFSDNEMQSPSE) and 319–343 (PHSEPGRKHSESNKELEKSNAHVNQ). A compositionally biased stretch (polar residues) spans 262–288 (DLKSSIDNQSDYSGRVSFSDNEMQSPS). Positions 322 to 343 (EPGRKHSESNKELEKSNAHVNQ) are enriched in basic and acidic residues. The stretch at 327 to 563 (HSESNKELEK…KQELEHHQET (237 aa)) forms a coiled coil.

It belongs to the FPP family. As to quaternary structure, interacts with WPP/MAF proteins. Binds to COG2; this interaction promotes the association between cortical microtubules and EXO70A1. Accumulates in preferentially xylem cells.

The protein resides in the vesicle. Its function is as follows. Ensures, when in complex with COG2 and FPP2/VETH2, the correct secondary cell wall (SCW) deposition pattern by recruiting exocyst components to cortical microtubules in xylem cells during secondary cell wall deposition by recruiting EXO70A1. This chain is Filament-like plant protein 3, found in Arabidopsis thaliana (Mouse-ear cress).